We begin with the raw amino-acid sequence, 443 residues long: Delta(6)-fatty-acid desaturase fat-3 (443 aa).

Residues 1 to 71 (MVVDKNASGL…DLLKKHGEHD (71 aa)) enclose the Cytochrome b5 heme-binding domain. 3 helical membrane-spanning segments follow: residues 136-156 (IMAFAFYLQYLGWYITSACLL), 296-316 (TIVGHWAWVFYQLFLLPTWPL), and 318-338 (VAYFIISQMGGGLLIAHVVTF).

Belongs to the fatty acid desaturase type 1 family.

The protein resides in the membrane. The enzyme catalyses (9Z,12Z)-octadecadienoyl-CoA + 2 Fe(II)-[cytochrome b5] + O2 + 2 H(+) = (6Z,9Z,12Z)-octadecatrienoyl-CoA + 2 Fe(III)-[cytochrome b5] + 2 H2O. It catalyses the reaction (9Z,12Z,15Z)-octadecatrienoyl-CoA + 2 Fe(II)-[cytochrome b5] + O2 + 2 H(+) = (6Z,9Z,12Z,15Z)-octadecatetraenoyl-CoA + 2 Fe(III)-[cytochrome b5] + 2 H2O. It functions in the pathway lipid metabolism; polyunsaturated fatty acid biosynthesis. Functionally, can function as a Delta(6) fatty acid desaturase. Introduces a double bond in the fatty acid chain 6 carbons away from carboxy terminal to biosynthesize polyunsaturated fatty acids (PUFAs) endogenously (PUFAs are essential for membrane structure and many cellular and physiological processes). Acts on a variety of substrates such as linoleoyl-CoA ((9Z,12Z)-octadecadienoyl-CoA, C18:2n-6) and alpha-linolenoyl-CoA ((9Z,12Z,15Z)-octadecatrienoyl-CoA, C18:3n-3) to produce gamma-linolenoyl-CoA ((6Z,9Z,12Z)-octadecatrienoyl-CoA, C18:3n-6) and (6Z,9Z,12Z,15Z)-octadecatetraenoyl-CoA (18:4n-3) respectively. Unlike plants, Caenorhabditis elegans desaturases seem to use fatty acyl-CoAs as substrates. Plays a role in synaptic vesicle recycling by regulating synaptojanin unc-26 localization at synapses. This Caenorhabditis elegans protein is Delta(6)-fatty-acid desaturase fat-3 (fat-3).